A 612-amino-acid polypeptide reads, in one-letter code: Threonine--tRNA ligase (612 aa).

Positions 218-509 (DHRKLGVELG…LSEHFWGNFP (292 aa)) are catalytic. Positions 310, 361, and 486 each coordinate Zn(2+).

This sequence belongs to the class-II aminoacyl-tRNA synthetase family. In terms of assembly, homodimer. Requires Zn(2+) as cofactor.

It localises to the cytoplasm. The catalysed reaction is tRNA(Thr) + L-threonine + ATP = L-threonyl-tRNA(Thr) + AMP + diphosphate + H(+). Its function is as follows. Catalyzes the attachment of threonine to tRNA(Thr) in a two-step reaction: L-threonine is first activated by ATP to form Thr-AMP and then transferred to the acceptor end of tRNA(Thr). Also edits incorrectly charged L-seryl-tRNA(Thr). In Helicobacter acinonychis (strain Sheeba), this protein is Threonine--tRNA ligase.